A 469-amino-acid polypeptide reads, in one-letter code: 6-phosphofructo-2-kinase/fructose-2,6-bisphosphatase 4 (469 aa).

The tract at residues 1–249 (MASPRELTQN…YYLMNIHVTP (249 aa)) is 6-phosphofructo-2-kinase. 46–54 (GLPARGKTY) provides a ligand contact to ATP. Beta-D-fructose 6-phosphate contacts are provided by R79 and R103. D129 is an active-site residue. Residues T131 and R137 each contribute to the beta-D-fructose 6-phosphate site. C159 is an active-site residue. Position 168-173 (168-173 (NIVQVK)) interacts with ATP. Residues K173, R194, and Y198 each coordinate beta-D-fructose 6-phosphate. Positions 250 to 469 (RSIYLCRHGE…EALVTVPAHQ (220 aa)) are fructose-2,6-bisphosphatase. R256 contributes to the beta-D-fructose 2,6-bisphosphate binding site. H257 serves as the catalytic Tele-phosphohistidine intermediate. Positions 263, 269, and 306 each coordinate beta-D-fructose 2,6-bisphosphate. The Proton donor/acceptor role is filled by E326. The beta-D-fructose 2,6-bisphosphate site is built by Y337, R351, K355, Y366, Q392, and R396. ATP is bound at residue 348 to 351 (FALR). Residues 392-396 (QAVMR) and Y428 contribute to the ATP site. T444 carries the post-translational modification Phosphothreonine; by PKC.

This sequence in the C-terminal section; belongs to the phosphoglycerate mutase family. Homodimer.

It catalyses the reaction beta-D-fructose 2,6-bisphosphate + H2O = beta-D-fructose 6-phosphate + phosphate. The enzyme catalyses beta-D-fructose 6-phosphate + ATP = beta-D-fructose 2,6-bisphosphate + ADP + H(+). The most important regulatory mechanism of these opposing activities is by phosphorylation and dephosphorylation of the enzyme. Functionally, synthesis and degradation of fructose 2,6-bisphosphate. This chain is 6-phosphofructo-2-kinase/fructose-2,6-bisphosphatase 4 (PFKFB4), found in Homo sapiens (Human).